Consider the following 445-residue polypeptide: UPF0210 protein SEQ_0468 (445 aa).

This sequence belongs to the UPF0210 family. Homodimer.

This chain is UPF0210 protein SEQ_0468, found in Streptococcus equi subsp. equi (strain 4047).